Reading from the N-terminus, the 365-residue chain is 3-dehydroquinate synthase (365 aa).

Residues 69–74, 103–107, 127–128, lysine 140, and lysine 149 each bind NAD(+); these read DGEAHK, GVIGD, and TT. Residues glutamate 182, histidine 245, and histidine 262 each contribute to the Zn(2+) site.

It belongs to the sugar phosphate cyclases superfamily. Dehydroquinate synthase family. NAD(+) serves as cofactor. Co(2+) is required as a cofactor. The cofactor is Zn(2+).

It localises to the cytoplasm. The enzyme catalyses 7-phospho-2-dehydro-3-deoxy-D-arabino-heptonate = 3-dehydroquinate + phosphate. It functions in the pathway metabolic intermediate biosynthesis; chorismate biosynthesis; chorismate from D-erythrose 4-phosphate and phosphoenolpyruvate: step 2/7. Its function is as follows. Catalyzes the conversion of 3-deoxy-D-arabino-heptulosonate 7-phosphate (DAHP) to dehydroquinate (DHQ). This Pseudomonas putida (strain ATCC 47054 / DSM 6125 / CFBP 8728 / NCIMB 11950 / KT2440) protein is 3-dehydroquinate synthase.